Consider the following 581-residue polypeptide: Arginine--tRNA ligase (581 aa).

Positions 122–132 (PNVAKPMHVGH) match the 'HIGH' region motif.

It belongs to the class-I aminoacyl-tRNA synthetase family. Monomer.

The protein localises to the cytoplasm. The catalysed reaction is tRNA(Arg) + L-arginine + ATP = L-arginyl-tRNA(Arg) + AMP + diphosphate. This chain is Arginine--tRNA ligase, found in Francisella tularensis subsp. tularensis (strain WY96-3418).